Consider the following 397-residue polypeptide: Proteinase-activated receptor 2 (397 aa).

Positions 1-25 are cleaved as a signal peptide; it reads MRSPSAAWLLGAAILLAASLSCSGT. Positions 26 to 36 are cleaved as a propeptide — removed for receptor activation; that stretch reads IQGTNRSSKGR. The N-linked (GlcNAc...) asparagine glycan is linked to Asn30. Topologically, residues 37–71 are extracellular; the sequence is SLIGKVDGTSHVTGKGVTVETVFSVDEFSASVLTG. A helical transmembrane segment spans residues 72–101; the sequence is KLTTVFLPIVYTIVFVVGLPSNGMALWVFL. Over 102–108 the chain is Cytoplasmic; the sequence is FRTKKKH. The helical transmembrane segment at 109–137 threads the bilayer; it reads PAVIYMANLALADLLSVIWFPLKIAYHIH. The Extracellular portion of the chain corresponds to 138–149; that stretch reads GNNWIYGEALCN. A disulfide bridge connects residues Cys148 and Cys226. A helical membrane pass occupies residues 150–177; sequence VLIGFFYGNMYCSILFMTCLSVQRYWVI. The Cytoplasmic segment spans residues 178-183; the sequence is VNPMGH. A helical membrane pass occupies residues 184–211; the sequence is SRKKANIAIGISLAIWLLILLVTIPLYV. The Extracellular portion of the chain corresponds to 212–235; the sequence is VKQTIFIPALNITTCHDVLPEQLL. Residue Asn222 is glycosylated (N-linked (GlcNAc...) asparagine). Residues 236–269 traverse the membrane as a helical segment; sequence VGDMFNYFLSLAIGVFLFPAFLTASAYVLMIRML. Residues 270–277 lie on the Cytoplasmic side of the membrane; it reads RSSAMDEN. The chain crosses the membrane as a helical span at residues 278-317; it reads SEKKRKRAIKLIVTVLAMYLICFTPSNLLLVVHYFLIKSQ. Over 318–323 the chain is Extracellular; that stretch reads GQSHVY. The helical transmembrane segment at 324-347 threads the bilayer; that stretch reads ALYIVALCLSTLNSCIDPFVYYFV. At 348 to 397 the chain is on the cytoplasmic side; sequence SHDFRDHAKNALLCRSVRTVKQMQVSLTSKKHSRKSSSYSSSSTTVKTSY. Cys361 is lipidated: S-palmitoyl cysteine. The tract at residues 373 to 397 is disordered; the sequence is SLTSKKHSRKSSSYSSSSTTVKTSY. The segment covering 383 to 397 has biased composition (low complexity); it reads SSSYSSSSTTVKTSY.

Belongs to the G-protein coupled receptor 1 family. In terms of assembly, interacts with TLR4, COPS5 and TMED2. Interacts with GNAQ, GNA11, GNA12, GNA13 and GNA14. Post-translationally, a proteolytic cleavage generates a new N-terminus that functions as a tethered ligand. Activating serine proteases include trypsin, mast cell tryptase, coagulation factors VII and Xa, myeloblastin/PRTN3 and membrane-type serine protease 1/ST14. Subsequent cleavage by serine proteases, including neutrophil elastase and cathepsin G, leads to receptor deactivation. At least in part, implicated proteases are also shown to activate the receptor; the glycosylation status of the receptor is thought to contribute to the difference. In addition to conventional trypsin-like proteases activated by other proteases and glycosidases derived from bacteria, fungi and insects. Activated by serine protease allergens such as dust mite Der p3 and Der p9 and mold Pen c13. Activated by P.gingivalis arginine-specific (trypsin-like) cysteine proteinases called gingipains. Activated by S.griseus exogenous chitinase. Activated by A.alternata aspartate protease; the cleavage generates non-conventional processed forms. Proteolytically cleaved by coagulation factor Xa (F10); cleavage results in activation of F2RL1-dependent signaling. In terms of processing, N-glycosylated and sialylated. Multiple phosphorylated on serine and threonine residues in the cytoplasmic region upon receptor activation; required for receptor desensitization and recruitment of beta-arrestin. Post-translationally, monoubiquitinated by CBL at the plasma membrane and in early endosomes; not required for receptor endocytosis but for translocation to late endosomes or lysosomes. Deubiquitination involves STAMBP and USP8; required for lysosomal trafficking and receptor degradation. Widely expressed in tissues with especially high levels in pancreas, liver, kidney, small intestine, and colon. Moderate expression is detected in many organs, but none in brain or skeletal muscle. Expressed in endothelial cells.

It is found in the cell membrane. With respect to regulation, activated upon interaction by mucunain, a cowhage (Mucuna pruriens) plant cysteine proteinase. Receptor for trypsin and trypsin-like enzymes coupled to G proteins. Its function is mediated through the activation of several signaling pathways including phospholipase C (PLC), intracellular calcium, mitogen-activated protein kinase (MAPK), I-kappaB kinase/NF-kappaB and Rho. Can also be transactivated by cleaved F2R/PAR1. Involved in modulation of inflammatory responses and regulation of innate and adaptive immunity, and acts as a sensor for proteolytic enzymes generated during infection. Generally is promoting inflammation. Can signal synergistically with TLR4 and probably TLR2 in inflammatory responses and modulates TLR3 signaling. Has a protective role in establishing the endothelial barrier; the activity involves coagulation factor X. Regulates endothelial cell barrier integrity during neutrophil extravasation, probably following proteolytic cleavage by PRTN3. Proposed to have a bronchoprotective role in airway epithelium, but also shown to compromise the airway epithelial barrier by interrupting E-cadherin adhesion. Involved in the regulation of vascular tone; activation results in hypotension presumably mediated by vasodilation. Associates with a subset of G proteins alpha subunits such as GNAQ, GNA11, GNA14, GNA12 and GNA13, but probably not with G(o)-alpha, G(i) subunit alpha-1 and G(i) subunit alpha-2. However, according to PubMed:21627585 can signal through G(i) subunit alpha. Believed to be a class B receptor which internalizes as a complex with arrestin and traffic with it to endosomal vesicles, presumably as desensitized receptor, for extended periods of time. Mediates inhibition of TNF-alpha stimulated JNK phosphorylation via coupling to GNAQ and GNA11; the function involves dissociation of RIPK1 and TRADD from TNFR1. Mediates phosphorylation of nuclear factor NF-kappa-B RELA subunit at 'Ser-536'; the function involves IKBKB and is predominantly independent of G proteins. Involved in cellular migration. Involved in cytoskeletal rearrangement and chemotaxis through beta-arrestin-promoted scaffolds; the function is independent of GNAQ and GNA11 and involves promotion of cofilin dephosphorylation and actin filament severing. Induces redistribution of COPS5 from the plasma membrane to the cytosol and activation of the JNK cascade is mediated by COPS5. Involved in the recruitment of leukocytes to the sites of inflammation and is the major PAR receptor capable of modulating eosinophil function such as pro-inflammatory cytokine secretion, superoxide production and degranulation. During inflammation promotes dendritic cell maturation, trafficking to the lymph nodes and subsequent T-cell activation. Involved in antimicrobial response of innate immune cells; activation enhances phagocytosis of Gram-positive and killing of Gram-negative bacteria. Acts synergistically with interferon-gamma in enhancing antiviral responses. Implicated in a number of acute and chronic inflammatory diseases such as of the joints, lungs, brain, gastrointestinal tract, periodontium, skin, and vascular systems, and in autoimmune disorders. Probably mediates activation of pro-inflammatory and pro-fibrotic responses in fibroblasts, triggered by coagulation factor Xa (F10). Mediates activation of barrier protective signaling responses in endothelial cells, triggered by coagulation factor Xa (F10). In Homo sapiens (Human), this protein is Proteinase-activated receptor 2 (F2RL1).